The primary structure comprises 287 residues: 4-hydroxybenzoate octaprenyltransferase (287 aa).

Helical transmembrane passes span 19-39 (PIGS…AADG), 43-63 (LHVL…GCVI), 94-116 (LALA…PLVI), 135-155 (FFAI…PMGF), 160-180 (GEVP…AVAY), 207-227 (FDVA…GWVG), 234-254 (ALYF…YTLI), and 269-286 (NNWL…DYLI).

This sequence belongs to the UbiA prenyltransferase family. Mg(2+) serves as cofactor.

It is found in the cell inner membrane. It carries out the reaction all-trans-octaprenyl diphosphate + 4-hydroxybenzoate = 4-hydroxy-3-(all-trans-octaprenyl)benzoate + diphosphate. The protein operates within cofactor biosynthesis; ubiquinone biosynthesis. Functionally, catalyzes the prenylation of para-hydroxybenzoate (PHB) with an all-trans polyprenyl group. Mediates the second step in the final reaction sequence of ubiquinone-8 (UQ-8) biosynthesis, which is the condensation of the polyisoprenoid side chain with PHB, generating the first membrane-bound Q intermediate 3-octaprenyl-4-hydroxybenzoate. This is 4-hydroxybenzoate octaprenyltransferase from Azoarcus sp. (strain BH72).